A 154-amino-acid chain; its full sequence is Endoribonuclease YbeY (154 aa).

The Zn(2+) site is built by H116, H120, and H126.

The protein belongs to the endoribonuclease YbeY family. Zn(2+) serves as cofactor.

It is found in the cytoplasm. Single strand-specific metallo-endoribonuclease involved in late-stage 70S ribosome quality control and in maturation of the 3' terminus of the 16S rRNA. This chain is Endoribonuclease YbeY, found in Buchnera aphidicola subsp. Baizongia pistaciae (strain Bp).